The following is a 108-amino-acid chain: Protein FATTY ACID EXPORT 7 (108 aa).

3 helical membrane-spanning segments follow: residues 32-52, 55-75, and 85-105; these read ISLV…TELP, PVLA…MMGS, and PAGL…HGLI.

The protein belongs to the TMEM14 family.

The protein resides in the membrane. In terms of biological role, may be involved in free fatty acids export. This Arabidopsis thaliana (Mouse-ear cress) protein is Protein FATTY ACID EXPORT 7.